Reading from the N-terminus, the 414-residue chain is Argininosuccinate synthase (414 aa).

12 to 20 (AYSGGLDTS) lines the ATP pocket. The L-citrulline site is built by Tyr90 and Ser95. Gly120 contributes to the ATP binding site. L-aspartate is bound by residues Thr122, Asn126, and Asp127. Asn126 is an L-citrulline binding site. L-citrulline-binding residues include Arg130, Ser179, Ser188, Glu264, and Tyr276.

Belongs to the argininosuccinate synthase family. Type 1 subfamily. As to quaternary structure, homotetramer.

It is found in the cytoplasm. The enzyme catalyses L-citrulline + L-aspartate + ATP = 2-(N(omega)-L-arginino)succinate + AMP + diphosphate + H(+). The protein operates within amino-acid biosynthesis; L-arginine biosynthesis; L-arginine from L-ornithine and carbamoyl phosphate: step 2/3. The polypeptide is Argininosuccinate synthase (Alkaliphilus metalliredigens (strain QYMF)).